The primary structure comprises 663 residues: Nuclear receptor-binding protein homolog (663 aa).

The segment covering 1–14 (MSNSQANAGSSGSA) has biased composition (low complexity). Positions 1–112 (MSNSQANAGS…SEDESEILEE (112 aa)) are disordered. Positions 19-46 (LNPSGSATLVPNLTTTNASSQATPASTI) are enriched in polar residues. 2 stretches are compositionally biased toward low complexity: residues 47–57 (PQQQQPQQSQP) and 81–94 (VVVA…NLDS). The span at 101-111 (DDSEDESEILE) shows a compositional bias: acidic residues. Residues 122–392 (REEVDQRDVP…ANDLLFHPLL (271 aa)) enclose the Protein kinase domain. Disordered stretches follow at residues 481–505 (PNFR…EPVD) and 638–663 (YVPQ…TTSN). Ser-489, Ser-495, and Ser-498 each carry phosphoserine. Thr-500 is subject to Phosphothreonine. Positions 641–652 (QDQQQYQQQQQE) are enriched in low complexity.

Belongs to the protein kinase superfamily. Ser/Thr protein kinase family.

The protein localises to the cytoplasm. It is found in the cell cortex. In terms of biological role, may play a role in subcellular trafficking between the endoplasmic reticulum and Golgi apparatus. The protein is Nuclear receptor-binding protein homolog of Drosophila pseudoobscura pseudoobscura (Fruit fly).